The chain runs to 463 residues: UDP-N-acetylmuramoylalanine--D-glutamate ligase (463 aa).

An ATP-binding site is contributed by 116–122; that stretch reads GTNGKTT.

This sequence belongs to the MurCDEF family.

It localises to the cytoplasm. It carries out the reaction UDP-N-acetyl-alpha-D-muramoyl-L-alanine + D-glutamate + ATP = UDP-N-acetyl-alpha-D-muramoyl-L-alanyl-D-glutamate + ADP + phosphate + H(+). Its pathway is cell wall biogenesis; peptidoglycan biosynthesis. Its function is as follows. Cell wall formation. Catalyzes the addition of glutamate to the nucleotide precursor UDP-N-acetylmuramoyl-L-alanine (UMA). The polypeptide is UDP-N-acetylmuramoylalanine--D-glutamate ligase (Synechococcus elongatus (strain ATCC 33912 / PCC 7942 / FACHB-805) (Anacystis nidulans R2)).